We begin with the raw amino-acid sequence, 492 residues long: Argininosuccinate lyase (492 aa).

It belongs to the lyase 1 family. Argininosuccinate lyase subfamily.

It localises to the cytoplasm. The catalysed reaction is 2-(N(omega)-L-arginino)succinate = fumarate + L-arginine. The protein operates within amino-acid biosynthesis; L-arginine biosynthesis; L-arginine from L-ornithine and carbamoyl phosphate: step 3/3. The polypeptide is Argininosuccinate lyase (Methanocorpusculum labreanum (strain ATCC 43576 / DSM 4855 / Z)).